A 428-amino-acid polypeptide reads, in one-letter code: Gamma-glutamyl phosphate reductase (428 aa).

It belongs to the gamma-glutamyl phosphate reductase family.

Its subcellular location is the cytoplasm. It carries out the reaction L-glutamate 5-semialdehyde + phosphate + NADP(+) = L-glutamyl 5-phosphate + NADPH + H(+). The protein operates within amino-acid biosynthesis; L-proline biosynthesis; L-glutamate 5-semialdehyde from L-glutamate: step 2/2. In terms of biological role, catalyzes the NADPH-dependent reduction of L-glutamate 5-phosphate into L-glutamate 5-semialdehyde and phosphate. The product spontaneously undergoes cyclization to form 1-pyrroline-5-carboxylate. The sequence is that of Gamma-glutamyl phosphate reductase from Afipia carboxidovorans (strain ATCC 49405 / DSM 1227 / KCTC 32145 / OM5) (Oligotropha carboxidovorans).